The following is a 233-amino-acid chain: Antiholin-like protein LrgB (233 aa).

6 helical membrane passes run 5 to 25 (LGIN…VIAT), 33 to 53 (GFFL…FLKL), 63 to 83 (IGGD…AIPL), 97 to 117 (IFGG…LVAI), 152 to 172 (LTSL…AKIV), and 212 to 232 (IAVV…APIL).

The protein belongs to the CidB/LrgB family. LrgB subfamily.

It is found in the cell membrane. Functionally, inhibits the expression or activity of extracellular murein hydrolases by interacting, possibly with LrgA, with the holin-like proteins CidA and/or CidB. The LrgAB and CidAB proteins may affect the proton motive force of the membrane. May be involved in programmed cell death (PCD), possibly triggering PCD in response to antibiotics and environmental stresses. This is Antiholin-like protein LrgB from Staphylococcus epidermidis (strain ATCC 12228 / FDA PCI 1200).